The chain runs to 492 residues: Probable sphingolipid transporter spinster homolog 1 (492 aa).

A helical membrane pass occupies residues Phe29–Ser49. N-linked (GlcNAc...) asparagine glycans are attached at residues Asn53 and Asn76. 7 helical membrane-spanning segments follow: residues Gly83–Leu103, Val119–Phe139, Met141–Ser161, Phe169–Gly189, Trp200–Lys220, Val279–Tyr299, and Ile317–Leu337. Residue Asn341 is glycosylated (N-linked (GlcNAc...) asparagine). The next 4 membrane-spanning stretches (helical) occupy residues Phe348 to Met368, Tyr372 to Val392, Leu407 to Leu427, and Thr442 to Met462. At Ser472 the chain carries Phosphoserine. The span at Ser472–Lys481 shows a compositional bias: acidic residues. Residues Ser472–Ala492 form a disordered region. Residue Asn488 is glycosylated (N-linked (GlcNAc...) asparagine).

Belongs to the major facilitator superfamily. Spinster (TC 2.A.1.49) family.

The protein localises to the late endosome membrane. It localises to the lysosome membrane. Probable sphingolipid transporter that plays a central role in endosomes and/or lysosomes storage. The protein is Probable sphingolipid transporter spinster homolog 1 of Arabidopsis thaliana (Mouse-ear cress).